Here is a 336-residue protein sequence, read N- to C-terminus: L-rhamnono-gamma-lactonase (336 aa).

The protein belongs to the metallo-dependent hydrolases superfamily. A divalent metal cation is required as a cofactor.

It carries out the reaction L-rhamnono-1,4-lactone + H2O = L-rhamnonate + H(+). With respect to regulation, inhibited by Zn(2+), Fe(2+) and Cu(2+), but not by EDTA. Its function is as follows. Hydrolase with high substrate specificity for L-rhamnono-1,4-lactone. Catalyzes the second step in an alternative pathway for rhamnose utilization that does not involve phosphorylated intermediates. This Scheffersomyces stipitis (strain ATCC 58785 / CBS 6054 / NBRC 10063 / NRRL Y-11545) (Yeast) protein is L-rhamnono-gamma-lactonase (LRA2).